The following is a 538-amino-acid chain: Adenine deaminase (538 aa).

The protein belongs to the metallo-dependent hydrolases superfamily. Adenine deaminase family. Mn(2+) serves as cofactor.

It carries out the reaction adenine + H2O + H(+) = hypoxanthine + NH4(+). The sequence is that of Adenine deaminase from Methanothermobacter thermautotrophicus (strain ATCC 29096 / DSM 1053 / JCM 10044 / NBRC 100330 / Delta H) (Methanobacterium thermoautotrophicum).